Here is a 237-residue protein sequence, read N- to C-terminus: U2 small nuclear ribonucleoprotein A' (237 aa).

3 LRR repeats span residues 53 to 74 (RTNIVDFTNNELEELPPLGHND), 75 to 95 (TVHTLLLSRNRLGRLDASRLP), and 97 to 118 (YLVNLNLAMNRFEKFEQLQGLR). Residues 132-170 (NVICHKEQYRETVIALCPQLAVLDGERVRQAERQAAPQN) enclose the LRRCT domain. The tract at residues 161–182 (QAERQAAPQNEKTDTPTEGPQP) is disordered.

The protein belongs to the U2 small nuclear ribonucleoprotein A family. Associated with the spliceosome.

Its subcellular location is the nucleus. Involved in pre-mRNA splicing. The chain is U2 small nuclear ribonucleoprotein A' (LEA1) from Eremothecium gossypii (strain ATCC 10895 / CBS 109.51 / FGSC 9923 / NRRL Y-1056) (Yeast).